The following is a 284-amino-acid chain: 1D-myo-inositol 2-acetamido-2-deoxy-alpha-D-glucopyranoside deacetylase (284 aa).

Positions 12, 15, and 146 each coordinate Zn(2+).

This sequence belongs to the MshB deacetylase family. Requires Zn(2+) as cofactor.

The enzyme catalyses 1D-myo-inositol 2-acetamido-2-deoxy-alpha-D-glucopyranoside + H2O = 1D-myo-inositol 2-amino-2-deoxy-alpha-D-glucopyranoside + acetate. In terms of biological role, catalyzes the deacetylation of 1D-myo-inositol 2-acetamido-2-deoxy-alpha-D-glucopyranoside (GlcNAc-Ins) in the mycothiol biosynthesis pathway. The protein is 1D-myo-inositol 2-acetamido-2-deoxy-alpha-D-glucopyranoside deacetylase of Mycolicibacterium gilvum (strain PYR-GCK) (Mycobacterium gilvum (strain PYR-GCK)).